We begin with the raw amino-acid sequence, 689 residues long: Methionine--tRNA ligase (689 aa).

Residues 15–25 (PYANGPIHLGH) carry the 'HIGH' region motif. Residues Cys146, Cys149, Cys159, and Cys162 each coordinate Zn(2+). Residues 332 to 336 (KMSKS) carry the 'KMSKS' region motif. Residue Lys335 participates in ATP binding. Residues 588–689 (DFAKIDLRIA…EGAQPGMRVK (102 aa)) enclose the tRNA-binding domain.

This sequence belongs to the class-I aminoacyl-tRNA synthetase family. MetG type 1 subfamily. Homodimer. It depends on Zn(2+) as a cofactor.

It localises to the cytoplasm. It catalyses the reaction tRNA(Met) + L-methionine + ATP = L-methionyl-tRNA(Met) + AMP + diphosphate. Functionally, is required not only for elongation of protein synthesis but also for the initiation of all mRNA translation through initiator tRNA(fMet) aminoacylation. The polypeptide is Methionine--tRNA ligase (Shewanella baltica (strain OS223)).